We begin with the raw amino-acid sequence, 318 residues long: tRNA-cytidine(32) 2-sulfurtransferase (318 aa).

A PP-loop motif motif is present at residues 52 to 57 (SGGKDS). 3 residues coordinate [4Fe-4S] cluster: cysteine 127, cysteine 130, and cysteine 218.

Belongs to the TtcA family. In terms of assembly, homodimer. It depends on Mg(2+) as a cofactor. [4Fe-4S] cluster is required as a cofactor.

It is found in the cytoplasm. It carries out the reaction cytidine(32) in tRNA + S-sulfanyl-L-cysteinyl-[cysteine desulfurase] + AH2 + ATP = 2-thiocytidine(32) in tRNA + L-cysteinyl-[cysteine desulfurase] + A + AMP + diphosphate + H(+). It functions in the pathway tRNA modification. Catalyzes the ATP-dependent 2-thiolation of cytidine in position 32 of tRNA, to form 2-thiocytidine (s(2)C32). The sulfur atoms are provided by the cysteine/cysteine desulfurase (IscS) system. This is tRNA-cytidine(32) 2-sulfurtransferase from Actinobacillus pleuropneumoniae serotype 5b (strain L20).